The following is a 650-amino-acid chain: DNA mismatch repair protein MutL (650 aa).

The tract at residues 374–420 (SSLPDTQRSQRQPEKAASGQRSSVDAGLSQGSSAHRASQTGLGQSGN) is disordered. Positions 392–420 (GQRSSVDAGLSQGSSAHRASQTGLGQSGN) are enriched in polar residues.

The protein belongs to the DNA mismatch repair MutL/HexB family.

In terms of biological role, this protein is involved in the repair of mismatches in DNA. It is required for dam-dependent methyl-directed DNA mismatch repair. May act as a 'molecular matchmaker', a protein that promotes the formation of a stable complex between two or more DNA-binding proteins in an ATP-dependent manner without itself being part of a final effector complex. The chain is DNA mismatch repair protein MutL from Shewanella amazonensis (strain ATCC BAA-1098 / SB2B).